The following is a 372-amino-acid chain: MEAKEKQHLLDARPAIRSYTGSLWQEGAGWIPLPRPGLDLQAIELAAQSNHHCHAQKGPDSHCDPKKGKAQRQLYVASAICLLFMIGEVVGGYLAHSLAVMTDAAHLLTDFASMLISLFSLWMSSRPATKTMNFGWQRAEILGALVSVLSIWVVTGVLVYLAVERLISGDYEIDGGTMLITSGCAVAVNIIMGLTLHQSGHGHSHGTTNQQEENPSVRAAFIHVIGDFMQSMGVLVAAYILYFKPEYKYVDPICTFVFSILVLGTTLTILRDVILVLMEGTPKGVDFTAVRDLLLSVEGVEALHSLHIWALTVAQPVLSVHIAIAQNTDAQAVLKTASSRLQGKFHFHTVTIQIEDYSEDMKDCQACQGPSD.

The Cytoplasmic portion of the chain corresponds to 1-140 (MEAKEKQHLL…TMNFGWQRAE (140 aa)). Positions 51 to 54 (HHCH) match the Mitochondrial localization signal motif. Zn(2+)-binding residues include C53, H106, and D110. A helical membrane pass occupies residues 141-161 (ILGALVSVLSIWVVTGVLVYL). Over 162 to 175 (AVERLISGDYEIDG) the chain is Lumenal. Residues 176–196 (GTMLITSGCAVAVNIIMGLTL) form a helical membrane-spanning segment. At 197–220 (HQSGHGHSHGTTNQQEENPSVRAA) the chain is on the cytoplasmic side. A helical membrane pass occupies residues 221–241 (FIHVIGDFMQSMGVLVAAYIL). Residues H223 and D227 each coordinate Zn(2+). Topologically, residues 242 to 249 (YFKPEYKY) are lumenal. Residues 250-270 (VDPICTFVFSILVLGTTLTIL) form a helical membrane-spanning segment. Residues 271–304 (RDVILVLMEGTPKGVDFTAVRDLLLSVEGVEALH) lie on the Cytoplasmic side of the membrane. The Lysosomal targeting motif signature appears at 294 to 295 (LL). S296 is modified (phosphoserine). 3 residues coordinate Zn(2+): H304, H321, and E355. The chain crosses the membrane as a helical span at residues 305 to 325 (SLHIWALTVAQPVLSVHIAIA). The Lumenal portion of the chain corresponds to 326–372 (QNTDAQAVLKTASSRLQGKFHFHTVTIQIEDYSEDMKDCQACQGPSD).

This sequence belongs to the cation diffusion facilitator (CDF) transporter (TC 2.A.4) family. SLC30A subfamily. Homodimer. Interacts (via lysosomal targeting motif) with AP3D1; in AP-3-mediated transport to lysosomes. Interacts with TMEM163. Phosphorylated at Ser-296. Phosphorylation at Ser-296 prevents localization to lysosomes. Dephosphorylation of Ser-296 which triggers localization to lysosomes, accumulation of zinc into lysosomes and lysosomal-mediated cell death is induced by TNF-alpha.

The protein resides in the cytoplasmic vesicle. It localises to the secretory vesicle membrane. Its subcellular location is the zymogen granule membrane. It is found in the endosome membrane. The protein localises to the lysosome membrane. The protein resides in the mitochondrion inner membrane. It localises to the cell membrane. It carries out the reaction Zn(2+)(in) + 2 H(+)(out) = Zn(2+)(out) + 2 H(+)(in). Its function is as follows. Electroneutral proton-coupled antiporter concentrating zinc ions into a variety of intracellular organelles including endosomes, zymogen granules and mitochondria. Thereby, plays a crucial role in cellular zinc homeostasis to confer upon cells protection against its potential cytotoxicity. Regulates the zinc concentration of milk, through the transport of zinc ions into secretory vesicles of mammary cells. By concentrating zinc ions into lysosomes participates to lysosomal-mediated cell death during early mammary gland involution. Electroneutral proton-coupled antiporter mediating the efflux of zinc ions through the plasma membrane. In Homo sapiens (Human), this protein is Proton-coupled zinc antiporter SLC30A2.